Here is a 270-residue protein sequence, read N- to C-terminus: Phosphatidylglycerol--prolipoprotein diacylglyceryl transferase (270 aa).

The next 7 helical transmembrane spans lie at 14-34, 60-80, 95-115, 128-148, 176-196, 202-222, and 238-258; these read VIFEIGPIGLRWYGLMYLLGF, LLFNGFMGVFLGGRIGYVLFY, VWEGGMSFHGGLIGVILAMLI, ADFVAPLIPFGLGMGRIGNFI, SQLYEAVLEGIVLFFILNWYI, IGATAGLFLLGYGIFRFIVEF, and ISMGQILSTPMILIGAVIMLV. Arg-143 lines the a 1,2-diacyl-sn-glycero-3-phospho-(1'-sn-glycerol) pocket.

It belongs to the Lgt family.

Its subcellular location is the cell inner membrane. The enzyme catalyses L-cysteinyl-[prolipoprotein] + a 1,2-diacyl-sn-glycero-3-phospho-(1'-sn-glycerol) = an S-1,2-diacyl-sn-glyceryl-L-cysteinyl-[prolipoprotein] + sn-glycerol 1-phosphate + H(+). The protein operates within protein modification; lipoprotein biosynthesis (diacylglyceryl transfer). Its function is as follows. Catalyzes the transfer of the diacylglyceryl group from phosphatidylglycerol to the sulfhydryl group of the N-terminal cysteine of a prolipoprotein, the first step in the formation of mature lipoproteins. In Pasteurella multocida (strain Pm70), this protein is Phosphatidylglycerol--prolipoprotein diacylglyceryl transferase.